The chain runs to 318 residues: Pantothenate kinase (318 aa).

96–103 (GSVAVGKS) serves as a coordination point for ATP.

This sequence belongs to the prokaryotic pantothenate kinase family.

It is found in the cytoplasm. It catalyses the reaction (R)-pantothenate + ATP = (R)-4'-phosphopantothenate + ADP + H(+). It functions in the pathway cofactor biosynthesis; coenzyme A biosynthesis; CoA from (R)-pantothenate: step 1/5. The polypeptide is Pantothenate kinase (Bradyrhizobium diazoefficiens (strain JCM 10833 / BCRC 13528 / IAM 13628 / NBRC 14792 / USDA 110)).